The following is a 243-amino-acid chain: UDP-2,3-diacylglucosamine hydrolase (243 aa).

Mn(2+)-binding residues include Asp9, His11, Asp42, Asn79, and His114. 79-80 contributes to the substrate binding site; it reads NR. Substrate-binding residues include Asp122, Ser160, Asn164, and His195. Mn(2+) is bound by residues His195 and His197.

Belongs to the LpxH family. Requires Mn(2+) as cofactor.

The protein resides in the cell inner membrane. It catalyses the reaction UDP-2-N,3-O-bis[(3R)-3-hydroxytetradecanoyl]-alpha-D-glucosamine + H2O = 2-N,3-O-bis[(3R)-3-hydroxytetradecanoyl]-alpha-D-glucosaminyl 1-phosphate + UMP + 2 H(+). Its pathway is glycolipid biosynthesis; lipid IV(A) biosynthesis; lipid IV(A) from (3R)-3-hydroxytetradecanoyl-[acyl-carrier-protein] and UDP-N-acetyl-alpha-D-glucosamine: step 4/6. In terms of biological role, hydrolyzes the pyrophosphate bond of UDP-2,3-diacylglucosamine to yield 2,3-diacylglucosamine 1-phosphate (lipid X) and UMP by catalyzing the attack of water at the alpha-P atom. Involved in the biosynthesis of lipid A, a phosphorylated glycolipid that anchors the lipopolysaccharide to the outer membrane of the cell. This chain is UDP-2,3-diacylglucosamine hydrolase, found in Coxiella burnetii (strain Dugway 5J108-111).